The primary structure comprises 258 residues: Indole-3-glycerol phosphate synthase (258 aa).

This sequence belongs to the TrpC family.

It catalyses the reaction 1-(2-carboxyphenylamino)-1-deoxy-D-ribulose 5-phosphate + H(+) = (1S,2R)-1-C-(indol-3-yl)glycerol 3-phosphate + CO2 + H2O. It functions in the pathway amino-acid biosynthesis; L-tryptophan biosynthesis; L-tryptophan from chorismate: step 4/5. This is Indole-3-glycerol phosphate synthase from Campylobacter fetus subsp. fetus (strain 82-40).